Consider the following 290-residue polypeptide: MASEKQYIAGVSGGSDSMLMLKLYQKKIACVVHVNYNTRSTSLRDQKLVEQYCQKLNIPLVVHTVDPDLVWKKNFQNQARKIRFDQFKKTAKLYQTNKLLLAHHRDDFIEQAKMQLDAKKRAVYYGIKTRCELYGLKIYRPLMKYWKDEIIALCRQDHIPYEIDETNKLPIYKRNEVRLEIEKWSKIEKEQFYIAICAMNKTIAQKLFVLMKKAKKWLLQPDVRELKRFSIIDQKQLIYSYLIYHKINVNGEKIDAILDFIQPSQQKQYRLQNDIFLMVKNQCLALLYKS.

12-17 contributes to the ATP binding site; it reads SGGSDS.

This sequence belongs to the tRNA(Ile)-lysidine synthase family.

It is found in the cytoplasm. The enzyme catalyses cytidine(34) in tRNA(Ile2) + L-lysine + ATP = lysidine(34) in tRNA(Ile2) + AMP + diphosphate + H(+). Ligates lysine onto the cytidine present at position 34 of the AUA codon-specific tRNA(Ile) that contains the anticodon CAU, in an ATP-dependent manner. Cytidine is converted to lysidine, thus changing the amino acid specificity of the tRNA from methionine to isoleucine. The chain is tRNA(Ile)-lysidine synthase from Mycoplasma genitalium (strain ATCC 33530 / DSM 19775 / NCTC 10195 / G37) (Mycoplasmoides genitalium).